A 469-amino-acid polypeptide reads, in one-letter code: 3-isopropylmalate dehydratase large subunit (469 aa).

Positions 347, 410, and 413 each coordinate [4Fe-4S] cluster.

It belongs to the aconitase/IPM isomerase family. LeuC type 1 subfamily. In terms of assembly, heterodimer of LeuC and LeuD. [4Fe-4S] cluster is required as a cofactor.

The catalysed reaction is (2R,3S)-3-isopropylmalate = (2S)-2-isopropylmalate. Its pathway is amino-acid biosynthesis; L-leucine biosynthesis; L-leucine from 3-methyl-2-oxobutanoate: step 2/4. In terms of biological role, catalyzes the isomerization between 2-isopropylmalate and 3-isopropylmalate, via the formation of 2-isopropylmaleate. The polypeptide is 3-isopropylmalate dehydratase large subunit (Burkholderia pseudomallei (strain 1106a)).